Here is a 499-residue protein sequence, read N- to C-terminus: Glutelin type-B 1 (499 aa).

Residues 1 to 24 (MASSVFSRFSIYFCVLLLCHGSMA) form the signal peptide. 2 disulfides stabilise this stretch: C45–C78 and C121–C309. Cupin type-1 domains lie at 50-247 (LQAF…VAAK) and 315-464 (VNIE…EQAR). The tract at residues 467–499 (KNNRGEEHGAFTPRFQQQYYPGLSNESESETSE) is disordered.

Belongs to the 11S seed storage protein (globulins) family. Hexamer; each subunit is composed of an acidic and a basic chain derived from a single precursor and linked by a disulfide bond.

In terms of biological role, seed storage protein. In Oryza sativa subsp. japonica (Rice), this protein is Glutelin type-B 1 (GluB1-A).